Here is an 858-residue protein sequence, read N- to C-terminus: Bifunctional uridylyltransferase/uridylyl-removing enzyme (858 aa).

The uridylyltransferase stretch occupies residues methionine 1 to leucine 324. Residues serine 325–leucine 681 are uridylyl-removing. The region spanning valine 443 to leucine 565 is the HD domain. ACT domains are found at residues glutamine 682–serine 761 and isoleucine 790–valine 858.

This sequence belongs to the GlnD family. The cofactor is Mg(2+).

It carries out the reaction [protein-PII]-L-tyrosine + UTP = [protein-PII]-uridylyl-L-tyrosine + diphosphate. The catalysed reaction is [protein-PII]-uridylyl-L-tyrosine + H2O = [protein-PII]-L-tyrosine + UMP + H(+). Its activity is regulated as follows. Uridylyltransferase (UTase) activity is inhibited by glutamine, while glutamine activates uridylyl-removing (UR) activity. Modifies, by uridylylation and deuridylylation, the PII regulatory proteins (GlnB and homologs), in response to the nitrogen status of the cell that GlnD senses through the glutamine level. Under low glutamine levels, catalyzes the conversion of the PII proteins and UTP to PII-UMP and PPi, while under higher glutamine levels, GlnD hydrolyzes PII-UMP to PII and UMP (deuridylylation). Thus, controls uridylylation state and activity of the PII proteins, and plays an important role in the regulation of nitrogen assimilation and metabolism. This chain is Bifunctional uridylyltransferase/uridylyl-removing enzyme, found in Burkholderia mallei (strain NCTC 10247).